The primary structure comprises 365 residues: Mitogen-activated protein kinase HOG1A (365 aa).

The Protein kinase domain occupies 24–303 (YTDLQPVGMG…AADALAHPYL (280 aa)). Residues 30 to 38 (VGMGAFGLL) and lysine 53 contribute to the ATP site. Aspartate 145 acts as the Proton acceptor in catalysis. Threonine 175 bears the Phosphothreonine mark. The short motif at 175–177 (TGY) is the TXY element. Tyrosine 177 is subject to Phosphotyrosine.

This sequence belongs to the protein kinase superfamily. Ser/Thr protein kinase family. MAP kinase subfamily. HOG1 sub-subfamily. Requires Mg(2+) as cofactor. In terms of processing, phosphorylated. Dually phosphorylated on Thr-175 and Tyr-177, which activates the enzyme. Rapidly dephosphorylated upon either hypo- or hyperosmotic shock.

It is found in the cytoplasm. The protein resides in the nucleus. The catalysed reaction is L-seryl-[protein] + ATP = O-phospho-L-seryl-[protein] + ADP + H(+). The enzyme catalyses L-threonyl-[protein] + ATP = O-phospho-L-threonyl-[protein] + ADP + H(+). With respect to regulation, activated by tyrosine and threonine phosphorylation. Proline-directed serine/threonine-protein kinase involved in a signal transduction pathway that is activated by changes in the osmolarity of the extracellular environment. Controls osmotic regulation of transcription of target genes. This is Mitogen-activated protein kinase HOG1A (HOG1A) from Wallemia ichthyophaga (strain EXF-994 / CBS 113033).